The chain runs to 293 residues: Phosphoribosylaminoimidazole-succinocarboxamide synthase (293 aa).

Belongs to the SAICAR synthetase family.

The catalysed reaction is 5-amino-1-(5-phospho-D-ribosyl)imidazole-4-carboxylate + L-aspartate + ATP = (2S)-2-[5-amino-1-(5-phospho-beta-D-ribosyl)imidazole-4-carboxamido]succinate + ADP + phosphate + 2 H(+). It functions in the pathway purine metabolism; IMP biosynthesis via de novo pathway; 5-amino-1-(5-phospho-D-ribosyl)imidazole-4-carboxamide from 5-amino-1-(5-phospho-D-ribosyl)imidazole-4-carboxylate: step 1/2. The protein is Phosphoribosylaminoimidazole-succinocarboxamide synthase of Bordetella petrii (strain ATCC BAA-461 / DSM 12804 / CCUG 43448).